A 176-amino-acid polypeptide reads, in one-letter code: Glutathione-regulated potassium-efflux system ancillary protein KefF (176 aa).

Residues H8, 14 to 17, 65 to 68, and 105 to 108 contribute to the FMN site; these read SHAN, MQWY, and TTGG.

It belongs to the NAD(P)H dehydrogenase (quinone) family. KefF subfamily. In terms of assembly, homodimer. Interacts with KefC. FMN is required as a cofactor.

It localises to the cell inner membrane. It catalyses the reaction a quinone + NADH + H(+) = a quinol + NAD(+). The catalysed reaction is a quinone + NADPH + H(+) = a quinol + NADP(+). Its function is as follows. Regulatory subunit of a potassium efflux system that confers protection against electrophiles. Required for full activity of KefC. Shows redox enzymatic activity, but this enzymatic activity is not required for activation of KefC. This chain is Glutathione-regulated potassium-efflux system ancillary protein KefF, found in Salmonella dublin (strain CT_02021853).